A 270-amino-acid polypeptide reads, in one-letter code: 2-aminoethanethiol dioxygenase (270 aa).

The disordered stretch occupies residues 21-48; sequence FRGSGGGRGASDRDAASGPEAPMQPGFP. Fe cation contacts are provided by H112 and H114. Positions 140–164 are disordered; it reads GGQRPRALPPEQQFEPPLQPREREA. Position 193 (H193) interacts with Fe cation. The 3'-(S-cysteinyl)-tyrosine (Cys-Tyr) cross-link spans 220–223; that stretch reads CHYY.

Monomer. Fe cation serves as cofactor.

It catalyses the reaction cysteamine + O2 = hypotaurine + H(+). The enzyme catalyses N-terminal L-cysteinyl-[protein] + O2 = N-terminal S-hydroxy-S-oxy-L-cysteinyl-[protein] + H(+). Its function is as follows. Plays a vital role in regulating thiol metabolism and preserving oxygen homeostasis by oxidizing the sulfur of cysteamine and N-terminal cysteine-containing proteins to their corresponding sulfinic acids using O2 as a cosubstrate. Catalyzes the oxidation of cysteamine (2-aminoethanethiol) to hypotaurine. Catalyzes the oxidation of regulators of G-protein signaling 4 (RGS4) and 5 (RGS5) and interleukin-32 (IL32). The polypeptide is 2-aminoethanethiol dioxygenase (ADO) (Homo sapiens (Human)).